The following is a 376-amino-acid chain: Multiphosphoryl transfer protein (376 aa).

In terms of domain architecture, PTS EIIA type-2 spans 2-142 (FQLSVQDIHP…EELRALLMGE (141 aa)). H62 serves as the catalytic Tele-phosphohistidine intermediate; for EIIA activity. The residue at position 62 (H62) is a Phosphohistidine; by HPr. The m domain stretch occupies residues 156–284 (TLDVIASSLV…LTSDDALTDD (129 aa)). The 91-residue stretch at 285–375 (VLSAEFVVRN…DAIAAGLGEG (91 aa)) folds into the HPr domain. The Pros-phosphohistidine intermediate; for HPr activity role is filled by H299. H299 bears the Phosphohistidine; by EI mark.

The protein resides in the cytoplasm. Its function is as follows. The phosphoenolpyruvate-dependent sugar phosphotransferase system (sugar PTS), a major carbohydrate active transport system, catalyzes the phosphorylation of incoming sugar substrates concomitantly with their translocation across the cell membrane. The enzyme II FruAB PTS system is involved in fructose transport. The polypeptide is Multiphosphoryl transfer protein (fruB) (Salmonella typhimurium (strain LT2 / SGSC1412 / ATCC 700720)).